Here is a 427-residue protein sequence, read N- to C-terminus: D-inositol 3-phosphate glycosyltransferase 2 (427 aa).

H14 contacts 1D-myo-inositol 3-phosphate. UDP-N-acetyl-alpha-D-glucosamine is bound by residues Q20–P21 and G28. 1D-myo-inositol 3-phosphate is bound by residues D25–N30, K83, Y116, T140, and R160. R234, K239, and V300 together coordinate UDP-N-acetyl-alpha-D-glucosamine. Y309, R310, and A312 together coordinate Mg(2+). UDP-N-acetyl-alpha-D-glucosamine contacts are provided by E322 and E330. T336 contributes to the Mg(2+) binding site.

It belongs to the glycosyltransferase group 1 family. MshA subfamily. In terms of assembly, homodimer.

It catalyses the reaction 1D-myo-inositol 3-phosphate + UDP-N-acetyl-alpha-D-glucosamine = 1D-myo-inositol 2-acetamido-2-deoxy-alpha-D-glucopyranoside 3-phosphate + UDP + H(+). Its function is as follows. Catalyzes the transfer of a N-acetyl-glucosamine moiety to 1D-myo-inositol 3-phosphate to produce 1D-myo-inositol 2-acetamido-2-deoxy-glucopyranoside 3-phosphate in the mycothiol biosynthesis pathway. The polypeptide is D-inositol 3-phosphate glycosyltransferase 2 (Catenulispora acidiphila (strain DSM 44928 / JCM 14897 / NBRC 102108 / NRRL B-24433 / ID139908)).